The sequence spans 349 residues: Protein BPS1, chloroplastic (349 aa).

The N-terminal 43 residues, 1 to 43 (MARPQDPPRGFFPFGNPFKNLSSKNSVLSSKLLPLLNNFETNL), are a transit peptide targeting the chloroplast.

Expressed in roots, hypocotyls, cotyledons, leaves, flowers and siliques.

The protein localises to the plastid. It localises to the chloroplast. In terms of biological role, required for normal root and shoot development. Prevents constitutive production of a root mobile carotenoid-derived signaling compound that is capable of arresting shoot and leaf development. The polypeptide is Protein BPS1, chloroplastic (Arabidopsis thaliana (Mouse-ear cress)).